Reading from the N-terminus, the 296-residue chain is Bifunctional protein FolD 1 (296 aa).

NADP(+)-binding positions include 167–169 (GCG) and I235.

Belongs to the tetrahydrofolate dehydrogenase/cyclohydrolase family. As to quaternary structure, homodimer.

It catalyses the reaction (6R)-5,10-methylene-5,6,7,8-tetrahydrofolate + NADP(+) = (6R)-5,10-methenyltetrahydrofolate + NADPH. The catalysed reaction is (6R)-5,10-methenyltetrahydrofolate + H2O = (6R)-10-formyltetrahydrofolate + H(+). The protein operates within one-carbon metabolism; tetrahydrofolate interconversion. Catalyzes the oxidation of 5,10-methylenetetrahydrofolate to 5,10-methenyltetrahydrofolate and then the hydrolysis of 5,10-methenyltetrahydrofolate to 10-formyltetrahydrofolate. This is Bifunctional protein FolD 1 from Nocardioides sp. (strain ATCC BAA-499 / JS614).